Consider the following 229-residue polypeptide: Octanoyltransferase (229 aa).

The BPL/LPL catalytic domain maps to 45 to 220; it reads ATAVDELWVV…ELARQFCFVL (176 aa). Substrate contacts are provided by residues 84–91, 151–153, and 164–166; these read RGGQVTYH, ALG, and GVA. Cys182 acts as the Acyl-thioester intermediate in catalysis.

Belongs to the LipB family.

It localises to the cytoplasm. It catalyses the reaction octanoyl-[ACP] + L-lysyl-[protein] = N(6)-octanoyl-L-lysyl-[protein] + holo-[ACP] + H(+). It participates in protein modification; protein lipoylation via endogenous pathway; protein N(6)-(lipoyl)lysine from octanoyl-[acyl-carrier-protein]: step 1/2. In terms of biological role, catalyzes the transfer of endogenously produced octanoic acid from octanoyl-acyl-carrier-protein onto the lipoyl domains of lipoate-dependent enzymes. Lipoyl-ACP can also act as a substrate although octanoyl-ACP is likely to be the physiological substrate. This is Octanoyltransferase from Xylella fastidiosa (strain 9a5c).